Consider the following 315-residue polypeptide: Ribosomal protein L11 methyltransferase (315 aa).

Residues Thr163, Gly185, Asp207, and Asn249 each contribute to the S-adenosyl-L-methionine site.

The protein belongs to the methyltransferase superfamily. PrmA family.

Its subcellular location is the cytoplasm. It catalyses the reaction L-lysyl-[protein] + 3 S-adenosyl-L-methionine = N(6),N(6),N(6)-trimethyl-L-lysyl-[protein] + 3 S-adenosyl-L-homocysteine + 3 H(+). Functionally, methylates ribosomal protein L11. This Lactobacillus helveticus (strain DPC 4571) protein is Ribosomal protein L11 methyltransferase.